The following is a 324-amino-acid chain: tRNA N6-adenosine threonylcarbamoyltransferase (324 aa).

Residues His-107, His-111, and Tyr-127 each coordinate Fe cation. Residues 127-131 (YVSGG), Asp-159, Gly-172, Glu-176, and Asn-257 contribute to the substrate site. Asp-285 provides a ligand contact to Fe cation.

It belongs to the KAE1 / TsaD family. As to quaternary structure, monomer. Component of the KEOPS complex that consists of Kae1, Bud32, Cgi121 and Pcc1; the whole complex dimerizes. Fe(2+) serves as cofactor.

The protein localises to the cytoplasm. The catalysed reaction is L-threonylcarbamoyladenylate + adenosine(37) in tRNA = N(6)-L-threonylcarbamoyladenosine(37) in tRNA + AMP + H(+). Functionally, required for the formation of a threonylcarbamoyl group on adenosine at position 37 (t(6)A37) in tRNAs that read codons beginning with adenine. Is a component of the KEOPS complex that is probably involved in the transfer of the threonylcarbamoyl moiety of threonylcarbamoyl-AMP (TC-AMP) to the N6 group of A37. Kae1 likely plays a direct catalytic role in this reaction, but requires other protein(s) of the complex to fulfill this activity. The polypeptide is tRNA N6-adenosine threonylcarbamoyltransferase (Pyrococcus horikoshii (strain ATCC 700860 / DSM 12428 / JCM 9974 / NBRC 100139 / OT-3)).